The chain runs to 376 residues: DNA replication and repair protein RecF (376 aa).

Residue 30–37 participates in ATP binding; the sequence is GNNAQGKS.

It belongs to the RecF family.

Its subcellular location is the cytoplasm. Functionally, the RecF protein is involved in DNA metabolism; it is required for DNA replication and normal SOS inducibility. RecF binds preferentially to single-stranded, linear DNA. It also seems to bind ATP. This is DNA replication and repair protein RecF from Nostoc sp. (strain PCC 7120 / SAG 25.82 / UTEX 2576).